The following is a 1411-amino-acid chain: DNA-directed RNA polymerase subunit beta' (1411 aa).

4 residues coordinate Zn(2+): Cys69, Cys71, Cys84, and Cys87. The Mg(2+) site is built by Asp461, Asp463, and Asp465. Zn(2+)-binding residues include Cys809, Cys883, Cys890, and Cys893.

The protein belongs to the RNA polymerase beta' chain family. As to quaternary structure, the RNAP catalytic core consists of 2 alpha, 1 beta, 1 beta' and 1 omega subunit. When a sigma factor is associated with the core the holoenzyme is formed, which can initiate transcription. The cofactor is Mg(2+). Requires Zn(2+) as cofactor.

It catalyses the reaction RNA(n) + a ribonucleoside 5'-triphosphate = RNA(n+1) + diphosphate. Functionally, DNA-dependent RNA polymerase catalyzes the transcription of DNA into RNA using the four ribonucleoside triphosphates as substrates. In Ehrlichia ruminantium (strain Welgevonden), this protein is DNA-directed RNA polymerase subunit beta'.